Here is a 226-residue protein sequence, read N- to C-terminus: Urease accessory protein UreF (226 aa).

It belongs to the UreF family. As to quaternary structure, ureD, UreF and UreG form a complex that acts as a GTP-hydrolysis-dependent molecular chaperone, activating the urease apoprotein by helping to assemble the nickel containing metallocenter of UreC. The UreE protein probably delivers the nickel.

Its subcellular location is the cytoplasm. In terms of biological role, required for maturation of urease via the functional incorporation of the urease nickel metallocenter. The chain is Urease accessory protein UreF from Paraburkholderia xenovorans (strain LB400).